A 287-amino-acid chain; its full sequence is Shikimate kinase 3, chloroplastic (287 aa).

A chloroplast-targeting transit peptide spans 1-57 (MDAGVGLRAKPGAWAGLGNPRRSSTARVPVRFAVEKFAQPLVLGSDRRSCGAKLKVS). 98–105 (GMMGSGKT) contacts ATP. Thr-105 lines the Mg(2+) pocket. Positions 123, 148, and 170 each coordinate substrate. Arg-209 contributes to the ATP binding site.

Belongs to the shikimate kinase family. Mg(2+) serves as cofactor. In terms of tissue distribution, expressed in panicles.

It is found in the plastid. It localises to the chloroplast. The catalysed reaction is shikimate + ATP = 3-phosphoshikimate + ADP + H(+). It participates in metabolic intermediate biosynthesis; chorismate biosynthesis; chorismate from D-erythrose 4-phosphate and phosphoenolpyruvate: step 5/7. Catalyzes the specific phosphorylation of the 3-hydroxyl group of shikimic acid using ATP as a cosubstrate. This is Shikimate kinase 3, chloroplastic (SK3) from Oryza sativa subsp. japonica (Rice).